The chain runs to 202 residues: Glycerol-3-phosphate acyltransferase (202 aa).

Helical transmembrane passes span 3-23 (NLII…LILA), 61-81 (IATI…LKFL), 87-107 (LLWS…YLLF), 118-138 (GAMI…WVVI), 144-164 (ISSL…FIFN), and 167-187 (LEIH…YKHL).

The protein belongs to the PlsY family. Probably interacts with PlsX.

It is found in the cell inner membrane. It carries out the reaction an acyl phosphate + sn-glycerol 3-phosphate = a 1-acyl-sn-glycero-3-phosphate + phosphate. Its pathway is lipid metabolism; phospholipid metabolism. Its function is as follows. Catalyzes the transfer of an acyl group from acyl-phosphate (acyl-PO(4)) to glycerol-3-phosphate (G3P) to form lysophosphatidic acid (LPA). This enzyme utilizes acyl-phosphate as fatty acyl donor, but not acyl-CoA or acyl-ACP. This is Glycerol-3-phosphate acyltransferase from Campylobacter jejuni subsp. jejuni serotype O:23/36 (strain 81-176).